Consider the following 561-residue polypeptide: Arf-GAP domain and FG repeat-containing protein 1 (561 aa).

An Arf-GAP domain is found at 11 to 135; it reads EKHLKMLRDM…WYVPPEQAKV (125 aa). A C4-type zinc finger spans residues 29-52; the sequence is CFDCDQRGPTYVNMTVGSFVCTSC. S167 carries the post-translational modification Phosphoserine. The tract at residues 171–193 is disordered; it reads LHLNKGTPTQSPVVGRSQGQQQE. Over residues 176–191 the composition is skewed to polar residues; it reads GTPTQSPVVGRSQGQQ. Residue T177 is modified to Phosphothreonine. Residues S181 and S362 each carry the phosphoserine modification. O-linked (GlcNAc) serine glycosylation occurs at S367. The interval 409–451 is disordered; it reads PVGASPQTQPASSGPAPFGATPSTNPFVAATGPSAASSTNPFQ. Residues 442-451 show a composition bias toward polar residues; it reads SAASSTNPFQ.

Interacts with EPS15R and EPS15. Interacts with FCHO1. In terms of processing, O-glycosylated.

The protein localises to the nucleus. It is found in the cytoplasmic vesicle. Functionally, required for vesicle docking or fusion during acrosome biogenesis. May play a role in RNA trafficking or localization. In Rattus norvegicus (Rat), this protein is Arf-GAP domain and FG repeat-containing protein 1 (Agfg1).